A 925-amino-acid chain; its full sequence is Serine/threonine-protein phosphatase 1 regulatory subunit 10 (925 aa).

The interval 1–348 (MGSGPIDPKE…EPAPPSEAMD (348 aa)) is interaction with TOX4. In terms of domain architecture, TFIIS N-terminal spans 73–147 (KLLNNWLTYS…SDWMAVIRSQ (75 aa)). The interval 147–211 (QSSTQPAEKD…APSHAKFRST (65 aa)) is disordered. Basic and acidic residues-rich tracts occupy residues 153–166 (AEKD…EGKS) and 174–196 (PLTE…EKPK). Residues Lys-179 and Lys-262 each participate in a glycyl lysine isopeptide (Lys-Gly) (interchain with G-Cter in SUMO2) cross-link. Disordered stretches follow at residues 304–398 (KIKK…KRKT), 536–555 (TLEP…SKLP), and 587–890 (SIMG…HGGD). Ser-313 carries the phosphoserine modification. The span at 325 to 336 (KTSTEPSTAKPS) shows a compositional bias: low complexity. Residues 357–433 (PPVEVPELMD…NKIKDFGEAA (77 aa)) are necessary for interaction with PPP1CA. Position 382 is a phosphoserine (Ser-382). The necessary for interaction with PPP1CC stretch occupies residues 393–408 (GRKRKTVTWPEEGKLR). Positions 394 to 423 (RKRKTVTWPEEGKLREYFYFELDETERVNV) match the PP1-binding motif motif. Thr-398 is modified (phosphothreonine; by PKA). Residues 418 to 619 (TERVNVNKIK…IKQMLVPHGL (202 aa)) are interaction with WDR82. Gly residues predominate over residues 540–551 (GGAGGSPDGAGG). A phosphoserine mark is found at Ser-545 and Ser-591. Residues 596 to 611 (PSEELLKQPDYSDKIK) show a composition bias toward basic and acidic residues. The segment covering 644–655 (PPGPGGPMPGPH) has biased composition (pro residues). Positions 656–665 (GGPGGPGGPV) are enriched in gly residues. Residue Arg-668 is modified to Omega-N-methylarginine. Positions 679–693 (GDPFWDGPGDPMRGG) are enriched in low complexity. Omega-N-methylarginine occurs at positions 696 and 741. Gly residues-rich tracts occupy residues 728–766 (ARGG…GMSS) and 775–829 (GPGG…AGGG). Composition is skewed to basic and acidic residues over residues 846–871 (PHDV…HDGP) and 879–890 (RGHDGGHNHGGD). The C3H1-type zinc-finger motif lies at 891-919 (MSKRPVCRHFMMKGNCRYENNCAFYHPGV).

Component of the PNUTS-PP1 complex (also named PTW/PP1 complex), composed of PPP1R10/PNUTS, TOX4, WDR82, and PPP1CA (or PPP1CB or PPP1CC). Post-translationally, phosphorylated on Ser-398 by PKA within the region necessary for interaction with PPP1CA.

Its subcellular location is the nucleus. It is found in the chromosome. Substrate-recognition component of the PNUTS-PP1 protein phosphatase complex, a protein phosphatase 1 (PP1) complex that promotes RNA polymerase II transcription pause-release, allowing transcription elongation. Promoter-proximal pausing by RNA polymerase II is a transcription halt following transcription initiation but prior to elongation, which acts as a checkpoint to control that transcripts are favorably configured for transcriptional elongation. The PNUTS-PP1 complex mediates the release of RNA polymerase II from promoter-proximal region of genes by catalyzing dephosphorylation of proteins involved in transcription, such as AFF4, CDK9, MEPCE, INTS12, NCBP1, POLR2M/GDOWN1 and SUPT6H. The PNUTS-PP1 complex also regulates RNA polymerase II transcription termination by mediating dephosphorylation of SUPT5H in termination zones downstream of poly(A) sites, thereby promoting deceleration of RNA polymerase II transcription. PNUTS-PP1 complex is also involved in the response to replication stress by mediating dephosphorylation of POLR2A at 'Ser-5' of the CTD, promoting RNA polymerase II degradation. The PNUTS-PP1 complex also plays a role in the control of chromatin structure and cell cycle progression during the transition from mitosis into interphase. PNUTS-PP1 complex mediates dephosphorylation of MYC, promoting MYC stability by preventing MYC ubiquitination by the SCF(FBXW7) complex. In addition to acts as a substrate-recognition component, PPP1R10/PNUTS also acts as a nuclear targeting subunit for the PNUTS-PP1 complex. In some context, PPP1R10/PNUTS also acts as an inhibitor of protein phosphatase 1 (PP1) activity by preventing access to substrates, such as RB. This is Serine/threonine-protein phosphatase 1 regulatory subunit 10 (PPP1R10) from Sus scrofa (Pig).